The chain runs to 441 residues: GVGFKAGVKDYRLTYYTPEYKTKDTDILAAFRMTPQPGVPAEEAGAAVAAESSTGTWTTVWTDGLTSLDRYKGRCYDIEPVAGEENQYIAYVAYPLDLFEEGSVTNMLTSIVGDVFGFKALRALXXEDLRIPPAYSKTFLGPPHGIQVERDKLNKYGRPLLGCTIKPKLGLSAKNYGRAVYECLRGGLDFTKDDENVNSQPFMRWRDRFLFVAEALFKSQAETGEIKGHYLNATAGTCEEMMKRAVFARELGVPIVMHDYLTGGFTANTSLAFYCRDNGLLLHIHRAMHAVIDRQKDHGMHFRVLAKALRMSGGDHIHAGTVVGKLEGEREVTLGFVDLLRDDYIEKDRSRGIYFTQDWVSMPGVFPVASGGIHVWHMPALTEIFGDDSVLQFGGGTLGHPWGNAPGAVANRVALEACVQARNEGRDLAREGNEIIREASK.

Lys-5 is modified (N6,N6,N6-trimethyllysine). Position 164 (Thr-164) interacts with substrate. Catalysis depends on Lys-166, which acts as the Proton acceptor. Lys-168 provides a ligand contact to substrate. Residues Lys-192, Asp-194, and Glu-195 each contribute to the Mg(2+) site. Position 192 is an N6-carboxylysine (Lys-192). His-285 functions as the Proton acceptor in the catalytic mechanism. Substrate is bound by residues Arg-286, His-318, and Ser-370.

Belongs to the RuBisCO large chain family. Type I subfamily. As to quaternary structure, heterohexadecamer of 8 large chains and 8 small chains; disulfide-linked. The disulfide link is formed within the large subunit homodimers. Requires Mg(2+) as cofactor. Post-translationally, the disulfide bond which can form in the large chain dimeric partners within the hexadecamer appears to be associated with oxidative stress and protein turnover.

It is found in the plastid. The protein resides in the chloroplast. It carries out the reaction 2 (2R)-3-phosphoglycerate + 2 H(+) = D-ribulose 1,5-bisphosphate + CO2 + H2O. It catalyses the reaction D-ribulose 1,5-bisphosphate + O2 = 2-phosphoglycolate + (2R)-3-phosphoglycerate + 2 H(+). Its function is as follows. RuBisCO catalyzes two reactions: the carboxylation of D-ribulose 1,5-bisphosphate, the primary event in carbon dioxide fixation, as well as the oxidative fragmentation of the pentose substrate in the photorespiration process. Both reactions occur simultaneously and in competition at the same active site. The sequence is that of Ribulose bisphosphate carboxylase large chain from Hemionitis engywookii (Fendler's false cloak fern).